The following is a 433-amino-acid chain: Probable exopolygalacturonase X (433 aa).

An N-terminal signal peptide occupies residues 1–21 (MKLTQATTLLLSLGLSLPVEG). The tract at residues 30–54 (VGPKPPFRPLPASTPRNKTCQVQSN) is disordered. Residues 43–54 (TPRNKTCQVQSN) are compositionally biased toward polar residues. 3 N-linked (GlcNAc...) asparagine glycosylation sites follow: Asn46, Asn127, and Asn197. The PbH1 1 repeat unit spans residues 229–250 (SSNIVIQNSVINNGDDCVSFKP). The active-site Proton donor is the Asp243. Cys245 and Cys262 are disulfide-bonded. N-linked (GlcNAc...) asparagine glycosylation is found at Asn251 and Asn263. A PbH1 2 repeat occupies 252–272 (STEILVQNLHCNGSHGISVGS). The active site involves His266. N-linked (GlcNAc...) asparagine glycosylation is found at Asn290, Asn295, Asn327, Asn352, and Asn362. Residues 325–346 (VQNITYDKMYIENVDWAIEVTQ) form a PbH1 3 repeat. A PbH1 4 repeat occupies 360–403 (PSNLTISDVYFNDLTGVTSGKNDPNVGTIICSSPDVCSGIHATN). An intrachain disulfide couples Cys390 to Cys396.

Belongs to the glycosyl hydrolase 28 family.

Its subcellular location is the secreted. It catalyses the reaction [(1-&gt;4)-alpha-D-galacturonosyl](n) + H2O = alpha-D-galacturonate + [(1-&gt;4)-alpha-D-galacturonosyl](n-1). Functionally, specific in hydrolyzing the terminal glycosidic bond of polygalacturonic acid and oligogalacturonates. The polypeptide is Probable exopolygalacturonase X (pgaX) (Aspergillus flavus (strain ATCC 200026 / FGSC A1120 / IAM 13836 / NRRL 3357 / JCM 12722 / SRRC 167)).